The chain runs to 310 residues: Bifunctional phosphoglucose/phosphomannose isomerase (310 aa).

Positions 22 to 152 constitute an SIS domain; the sequence is FDGSFRTGTF…IRPKHEDIEE (131 aa). D-fructose 6-phosphate-binding residues include Gly-41, Ser-42, Ser-80, Ser-82, Thr-85, and Arg-128. The active-site Proton acceptor is the Glu-202. 2 residues coordinate D-fructose 6-phosphate: His-218 and Lys-306. Catalysis depends on His-218, which acts as the Proton donor. Lys-306 serves as the catalytic Proton acceptor.

This sequence belongs to the PGI/PMI family. In terms of assembly, homodimer.

It catalyses the reaction alpha-D-glucose 6-phosphate = beta-D-fructose 6-phosphate. The catalysed reaction is D-mannose 6-phosphate = D-fructose 6-phosphate. With respect to regulation, inhibited by low concentrations of erythrose 4-phosphate and 6-phosphogluconate. Functionally, dual specificity isomerase that catalyzes the isomerization of both glucose-6-phosphate and mannose-6-phosphate to fructose-6-phosphate with similar catalytic efficiency. In Thermoplasma acidophilum (strain ATCC 25905 / DSM 1728 / JCM 9062 / NBRC 15155 / AMRC-C165), this protein is Bifunctional phosphoglucose/phosphomannose isomerase.